The sequence spans 469 residues: MGTVHARSLEPLPASGPDFGALGEEAEFVEVEPEAKQEILENKDVVVQHVHFDGLGRTKDDIIMYEIRDVFKAKNLIEVMRKSHEAREKLLRLGIFRQVDVLIDTCQGDDALPNGLDVTFEVTELRRLTGSYNTMVGNNEGSMVLGLKLPNLLGRAEKVTFQFSYGTKETSYGLSFFKPQPGNFDRNFSVNLYKVTGQFPWSSLRETDRGVSAEYSFPTWKTSHTVKWEGVWRELGCLSRVASFAVRKESGHSLKSSLSHSMVIDSRNSSILPKRGALLKVNQELAGYTGGDVSFLKEDFELQLNKQLILDTVFSASLWGGMLVPMGDKPSSIADRFYLGGPTSVRGFSMHSVGPQSEGDYLGGEAYWAGGLHLYTPLPFRPGQGGFGELFRTHFFLNAGNLCNLNYGEGPKAHIRKLAECIRWSYGAGIVLRLGNIARLELNYCVPMGVQRGDRICDGVQFGAGIRFL.

A POTRA domain is found at 45-125 (VVVQHVHFDG…LDVTFEVTEL (81 aa)). Lys255 bears the N6-methyllysine mark.

This sequence belongs to the SAM50/omp85 family. In terms of assembly, associates with the mitochondrial contact site and cristae organizing system (MICOS) complex, composed of at least MICOS10/MIC10, CHCHD3/MIC19, CHCHD6/MIC25, APOOL/MIC27, IMMT/MIC60, APOO/MIC23/MIC26 and QIL1/MIC13. This complex was also known under the names MINOS or MitOS complex. The MICOS complex associates with mitochondrial outer membrane proteins SAMM50, MTX1 and MTX2 (together described as components of the mitochondrial outer membrane sorting assembly machinery (SAM) complex) and DNAJC11, mitochondrial inner membrane protein TMEM11 and with HSPA9. The MICOS and SAM complexes together with DNAJC11 are part of a large protein complex spanning both membranes termed the mitochondrial intermembrane space bridging (MIB) complex. Interacts with IMMT/MIC60. Interacts with CHCHD3/MIC19. Interacts with ARMC1.

It localises to the mitochondrion outer membrane. It is found in the cytoplasm. The protein localises to the mitochondrion. Plays a crucial role in the maintenance of the structure of mitochondrial cristae and the proper assembly of the mitochondrial respiratory chain complexes. Required for the assembly of TOMM40 into the TOM complex. The sequence is that of Sorting and assembly machinery component 50 homolog (SAMM50) from Bos taurus (Bovine).